The chain runs to 129 residues: MAKEATRVRRRERKNISSGVVHINSTFNNTMITITDAQGNAIAWSSAGAQGFKGSRKSTPFAAQVAAEDCARKAQEHGMRSLEVEVCGPGSGRESALRALQSVGFIITSIRDVTPIPHNGCRPRKRRRV.

Belongs to the universal ribosomal protein uS11 family. As to quaternary structure, part of the 30S ribosomal subunit. Interacts with proteins S7 and S18. Binds to IF-3.

Located on the platform of the 30S subunit, it bridges several disparate RNA helices of the 16S rRNA. Forms part of the Shine-Dalgarno cleft in the 70S ribosome. This chain is Small ribosomal subunit protein uS11, found in Bartonella henselae (strain ATCC 49882 / DSM 28221 / CCUG 30454 / Houston 1) (Rochalimaea henselae).